A 310-amino-acid polypeptide reads, in one-letter code: Vomeronasal type-1 receptor 44 (310 aa).

At 1–20 the chain is on the extracellular side; it reads MNKANLLHIDTNIKITLLAE. The helical transmembrane segment at 21–41 threads the bilayer; it reads VSVGISANSILFIAYLCMLLG. The Cytoplasmic portion of the chain corresponds to 42-50; the sequence is ENRHKPIDL. The helical transmembrane segment at 51 to 71 threads the bilayer; that stretch reads YIAFLSLTQLMLLITMGLIAV. Residues 72–93 lie on the Extracellular side of the membrane; sequence DMFMPWGRWDSTTCQSLIYLHR. A disulfide bridge links C85 with C172. The chain crosses the membrane as a helical span at residues 94–114; sequence FLRGLTLCATCLLNVLWTITL. Over 115–131 the chain is Cytoplasmic; sequence SSRNSCLAKFKHKYPHH. The helical transmembrane segment at 132–152 threads the bilayer; sequence ISGAFLFLCVLYMSFSSHFLV. Topologically, residues 153–190 are extracellular; the sequence is SMTVTPNLTSENFMYVTQSCSLLPMSYSRTSMFSTPVA. N159 carries N-linked (GlcNAc...) asparagine glycosylation. Residues 191–211 form a helical membrane-spanning segment; it reads IRETFLISLMALSSGYMVALL. The Cytoplasmic segment spans residues 212–238; that stretch reads WRHKKQAQHLRSTSLSSKASPEQRATR. A helical membrane pass occupies residues 239–259; it reads TILLLMSFFVVFYILDTVIFH. Residues 260-268 lie on the Extracellular side of the membrane; it reads SRMKFKDGS. A helical membrane pass occupies residues 269–289; sequence ILYCFQIIVSHSYVTVSPFVF. At 290-310 the chain is on the cytoplasmic side; that stretch reads ICTEKHIIKFLRSMCGRIANI.

This sequence belongs to the G-protein coupled receptor 1 family.

It localises to the cell membrane. Its function is as follows. Putative pheromone receptor implicated in the regulation of social and reproductive behavior. The protein is Vomeronasal type-1 receptor 44 (Vmn1r44) of Mus musculus (Mouse).